Reading from the N-terminus, the 307-residue chain is Transcription factor bHLH127 (307 aa).

2 disordered regions span residues 41–68 (SDPLPILRGSGSGGREENTPLPPPLPHQ) and 101–155 (PHPQ…AEMH). Positions 110–119 (APPPPKPPSS) are enriched in pro residues. The region spanning 150–199 (RAAEMHNLAERRRREKINERMKTLQQLIPRCNKSTKVSMLEDVIEYVKSL) is the bHLH domain.

It belongs to the bHLH protein family. As to quaternary structure, homodimer.

It localises to the nucleus. The chain is Transcription factor bHLH127 (BHLH127) from Arabidopsis thaliana (Mouse-ear cress).